A 353-amino-acid chain; its full sequence is ATP-dependent kinase YFH7 (353 aa).

Residue 31–39 coordinates ATP; it reads GSPGSGKST.

The protein belongs to the YFH7 family.

Functionally, ATP-dependent kinase that could be involved in endoplasmic reticulum membrane assembly. The protein is ATP-dependent kinase YFH7 (YFH7) of Saccharomyces cerevisiae (strain JAY291) (Baker's yeast).